Here is a 287-residue protein sequence, read N- to C-terminus: N-acetylmannosamine kinase (287 aa).

Residues 5–12 (AIDIGGTK) and 131–138 (GVGGGIII) each bind ATP. Residues histidine 155, cysteine 165, cysteine 167, and cysteine 172 each contribute to the Zn(2+) site.

The protein belongs to the ROK (NagC/XylR) family. NanK subfamily. In terms of assembly, homodimer.

The catalysed reaction is an N-acyl-D-mannosamine + ATP = an N-acyl-D-mannosamine 6-phosphate + ADP + H(+). It functions in the pathway amino-sugar metabolism; N-acetylneuraminate degradation; D-fructose 6-phosphate from N-acetylneuraminate: step 2/5. Catalyzes the phosphorylation of N-acetylmannosamine (ManNAc) to ManNAc-6-P. The polypeptide is N-acetylmannosamine kinase (Vibrio cholerae serotype O1 (strain ATCC 39541 / Classical Ogawa 395 / O395)).